The following is a 618-amino-acid chain: Probable protein disulfide-isomerase A4 (618 aa).

Residues M1 to S21 form the signal peptide. Thioredoxin domains follow at residues T22 to D139, V138 to K254, and S480 to V609. 3 cysteine pairs are disulfide-bonded: C65/C68, C176/C179, and C529/C532. The Prevents secretion from ER signature appears at K615–L618.

This sequence belongs to the protein disulfide isomerase family.

The protein resides in the endoplasmic reticulum lumen. The enzyme catalyses Catalyzes the rearrangement of -S-S- bonds in proteins.. This chain is Probable protein disulfide-isomerase A4, found in Caenorhabditis elegans.